We begin with the raw amino-acid sequence, 597 residues long: Proteasome-associated ATPase (597 aa).

Over residues 1-12 the composition is skewed to basic and acidic residues; sequence MQHDRPGSRPEE. A disordered region spans residues 1–22; that stretch reads MQHDRPGSRPEEGGEQQIGGDA. Positions 21-97 form a coiled coil; it reads DAELNSQIRL…REEVDRLAQP (77 aa). 284–289 is an ATP binding site; the sequence is GCGKTL. The interval 596 to 597 is docks into pockets in the proteasome alpha-ring; that stretch reads YL.

Belongs to the AAA ATPase family. As to quaternary structure, homohexamer. Assembles into a hexameric ring structure that caps the 20S proteasome core. Strongly interacts with the prokaryotic ubiquitin-like protein Pup through a hydrophobic interface; the interacting region of ARC lies in its N-terminal coiled-coil domain. There is one Pup binding site per ARC hexamer ring. Upon ATP-binding, the C-terminus of ARC interacts with the alpha-rings of the proteasome core, possibly by binding to the intersubunit pockets.

The protein operates within protein degradation; proteasomal Pup-dependent pathway. Its function is as follows. ATPase which is responsible for recognizing, binding, unfolding and translocation of pupylated proteins into the bacterial 20S proteasome core particle. May be essential for opening the gate of the 20S proteasome via an interaction with its C-terminus, thereby allowing substrate entry and access to the site of proteolysis. Thus, the C-termini of the proteasomal ATPase may function like a 'key in a lock' to induce gate opening and therefore regulate proteolysis. The polypeptide is Proteasome-associated ATPase (Saccharopolyspora erythraea (strain ATCC 11635 / DSM 40517 / JCM 4748 / NBRC 13426 / NCIMB 8594 / NRRL 2338)).